Reading from the N-terminus, the 362-residue chain is Dihydroorotate dehydrogenase (quinone) (362 aa).

FMN is bound by residues 60 to 64 and Thr-84; that span reads AGFDK. Lys-64 contacts substrate. Residue 109–113 coordinates substrate; that stretch reads NRMGF. The FMN site is built by Asn-137 and Asn-168. Asn-168 lines the substrate pocket. Catalysis depends on Ser-171, which acts as the Nucleophile. Asn-173 provides a ligand contact to substrate. FMN contacts are provided by Lys-213 and Ser-241. Position 242 to 243 (242 to 243) interacts with substrate; that stretch reads NT. Residues Gly-264, Gly-293, and 314–315 contribute to the FMN site; that span reads YS.

Belongs to the dihydroorotate dehydrogenase family. Type 2 subfamily. Monomer. The cofactor is FMN.

It is found in the cell membrane. It catalyses the reaction (S)-dihydroorotate + a quinone = orotate + a quinol. Its pathway is pyrimidine metabolism; UMP biosynthesis via de novo pathway; orotate from (S)-dihydroorotate (quinone route): step 1/1. Functionally, catalyzes the conversion of dihydroorotate to orotate with quinone as electron acceptor. This Bartonella henselae (strain ATCC 49882 / DSM 28221 / CCUG 30454 / Houston 1) (Rochalimaea henselae) protein is Dihydroorotate dehydrogenase (quinone).